The following is a 1312-amino-acid chain: Angiotensin-converting enzyme (1312 aa).

Positions 1-34 (MGAASGQRGRWPLSPPLLMLSLLVLLLQPSPAPA) are cleaved as a signal peptide. The Extracellular segment spans residues 35-1264 (LDPGLQPGNF…LEPQQARVGQ (1230 aa)). 2 consecutive Peptidase M2 domains span residues 45-629 (SPDE…LGWP) and 648-1227 (ETDE…LGWP). 5 N-linked (GlcNAc...) asparagine glycosylation sites follow: Asn-59, Asn-79, Asn-116, Asn-151, and Asn-165. Cys-162 and Cys-170 are joined by a disulfide. A chloride-binding site is contributed by Tyr-236. The N-linked (GlcNAc...) asparagine glycan is linked to Asn-323. A disulfide bond links Cys-364 and Cys-382. His-395 provides a ligand contact to Zn(2+). Residue Glu-396 is the Proton acceptor 1 of the active site. Zn(2+)-binding residues include His-399 and Glu-423. A glycan (N-linked (GlcNAc...) asparagine) is linked at Asn-514. His-525 functions as the Proton donor 1 in the catalytic mechanism. Arg-534 provides a ligand contact to chloride. A disulfide bond links Cys-550 and Cys-562. Asn-682 carries an N-linked (GlcNAc...) asparagine glycan. Residues Asn-700 and Asn-719 are each glycosylated (N-linked (GlcNAc...) (complex) asparagine). A disulfide bridge connects residues Cys-762 and Cys-768. Residue Asn-765 is glycosylated (N-linked (GlcNAc...) asparagine). Positions 796 and 834 each coordinate chloride. The N-linked (GlcNAc...) asparagine glycan is linked to Asn-947. The cysteines at positions 962 and 980 are disulfide-linked. His-993 contacts Zn(2+). The active-site Proton acceptor 2 is Glu-994. Zn(2+)-binding residues include His-997 and Glu-1021. Chloride contacts are provided by Trp-1095 and Arg-1099. Residue His-1123 is the Proton donor 2 of the active site. Arg-1132 lines the chloride pocket. A disulfide bridge connects residues Cys-1148 and Cys-1160. N-linked (GlcNAc...) asparagine glycosylation occurs at Asn-1196. The segment at 1220 to 1261 (HGETLGWPEYNWAPNTARAEGSTAESNRVNFLGLYLEPQQAR) is juxtamembrane stalk. Residues 1265–1281 (WVLLFLGVALLVATVGL) form a helical membrane-spanning segment. Topologically, residues 1282 to 1312 (AHRLYNIRNHHSLRRPHRGPQFGSEVELRHS) are cytoplasmic. Ser-1305 is subject to Phosphoserine.

Belongs to the peptidase M2 family. Monomer and homodimer; homodimerizes following binding to an inhibitor. Interacts with calmodulin (CALM1, CALM2 or CALM3); interaction takes place in the cytoplasmic region and regulates phosphorylation and proteolytic cleavage. The cofactor is Zn(2+). Requires chloride as cofactor. Post-translationally, produced following proteolytic cleavage by secretase enzymes that cleave the transmembrane form in the juxtamembrane stalk region upstream of the transmembrane region. Cleavage can take place at different sites of the juxtamembrane stalk region. In terms of processing, phosphorylated by CK2 on Ser-1305; which allows membrane retention. Phosphorylated on tyrosine residues on its extracellular part, promoting cleavage by secretase enzymes and formation of the soluble form (Angiotensin-converting enzyme, soluble form). Highly expressed in kidney and lung; not expressed in the liver. In the brain, expressed in the cerebral cortex, hippocampus, cerebellum and basal ganglia/brainstem. Highly expressed in dopamine receptor DRD1-expressing neurons in the dorsal striatum and the nucleus accumbens of the brain. In terms of tissue distribution, specifically expressed in spermatocytes, adult testis.

It localises to the cell membrane. It is found in the cytoplasm. Its subcellular location is the secreted. It catalyses the reaction Release of a C-terminal dipeptide, oligopeptide-|-Xaa-Yaa, when Xaa is not Pro, and Yaa is neither Asp nor Glu. Thus, conversion of angiotensin I to angiotensin II, with increase in vasoconstrictor activity, but no action on angiotensin II.. It carries out the reaction angiotensin I + H2O = L-histidyl-L-leucine + angiotensin II. The catalysed reaction is bradykinin + H2O = L-Phe-L-Arg + bradykinin(1-7). The enzyme catalyses substance P + H2O = substance P(1-9) + L-Leu-L-Met-NH2. It catalyses the reaction substance P + H2O = substance P(1-8) + Gly-L-Leu-L-Met-NH2. It carries out the reaction substance P + H2O = L-Phe-L-Phe-Gly-L-Leu-L-Met-NH2 + substance P(1-6). The catalysed reaction is neurotensin + H2O = neurotensin(1-11) + L-isoleucyl-L-leucine. The enzyme catalyses goralatide + H2O = N-acetyl-L-seryl-L-aspartate + L-lysyl-L-proline. It catalyses the reaction Met-enkephalin + H2O = L-phenylalanyl-L-methionine + L-tyrosylglycylglycine. It carries out the reaction Leu-enkephalin + H2O = L-tyrosylglycylglycine + L-phenylalanyl-L-leucine. The catalysed reaction is Met-enkephalin-Arg-Phe + H2O = L-arginyl-L-phenylalanine + Met-enkephalin. Its activity is regulated as follows. The dipeptidyl carboxypeptidase activity is specifically inhibited by lisinopril, captopril and enalaprilat. The N-terminal catalytic domain, but not the C-terminal catalytic domain, is specifically inhibited by the phosphinic peptide RXP 407. The putative GPIase activity is nearly insensitive to captopril. Its function is as follows. Dipeptidyl carboxypeptidase that removes dipeptides from the C-terminus of a variety of circulating hormones, such as angiotensin I, bradykinin or enkephalins, thereby playing a key role in the regulation of blood pressure, electrolyte homeostasis or synaptic plasticity. Composed of two similar catalytic domains, each possessing a functional active site, with different selectivity for substrates. Plays a major role in the angiotensin-renin system that regulates blood pressure and sodium retention by the kidney by converting angiotensin I to angiotensin II, resulting in an increase of the vasoconstrictor activity of angiotensin. Also able to inactivate bradykinin, a potent vasodilator, and therefore enhance the blood pressure response. Acts as a regulator of synaptic transmission by mediating cleavage of neuropeptide hormones, such as substance P, neurotensin or enkephalins. Catalyzes degradation of different enkephalin neuropeptides (Met-enkephalin, Leu-enkephalin, Met-enkephalin-Arg-Phe and possibly Met-enkephalin-Arg-Gly-Leu). Acts as a regulator of synaptic plasticity in the nucleus accumbens of the brain by mediating cleavage of Met-enkephalin-Arg-Phe, a strong ligand of Mu-type opioid receptor OPRM1, into Met-enkephalin. Met-enkephalin-Arg-Phe cleavage by ACE decreases activation of OPRM1, leading to long-term synaptic potentiation of glutamate release. Also acts as a regulator of hematopoietic stem cell differentiation by mediating degradation of hemoregulatory peptide N-acetyl-SDKP (AcSDKP). Acts as a regulator of cannabinoid signaling pathway by mediating degradation of hemopressin, an antagonist peptide of the cannabinoid receptor CNR1. Involved in amyloid-beta metabolism by catalyzing degradation of Amyloid-beta protein 40 and Amyloid-beta protein 42 peptides, thereby preventing plaque formation. Catalyzes cleavage of cholecystokinin (maturation of Cholecystokinin-8 and Cholecystokinin-5) and Gonadoliberin-1 (both maturation and degradation) hormones. Degradation of hemoregulatory peptide N-acetyl-SDKP (AcSDKP) and amyloid-beta proteins is mediated by the N-terminal catalytic domain, while angiotensin I and cholecystokinin cleavage is mediated by the C-terminal catalytic region. Functionally, soluble form that is released in blood plasma and other body fluids following proteolytic cleavage in the juxtamembrane stalk region. In terms of biological role, isoform produced by alternative promoter usage that is specifically expressed in spermatocytes and adult testis, and which is required for male fertility. In contrast to somatic isoforms, only contains one catalytic domain. Acts as a dipeptidyl carboxypeptidase that removes dipeptides from the C-terminus of substrates. The identity of substrates that are needed for male fertility is unknown. Isoform Testis-specific and isoform Somatic have distinct activities and cannot completely compensate for the loss of the other when expressed in somatic tissues or testis. May also have a glycosidase activity which releases GPI-anchored proteins from the membrane by cleaving the mannose linkage in the GPI moiety. The GPIase activity was reported to be essential for the egg-binding ability of the sperm. This activity is however unclear and has been challenged by other groups, suggesting that it may be indirect. The protein is Angiotensin-converting enzyme of Mus musculus (Mouse).